The chain runs to 68 residues: Beta-defensin 1 (68 aa).

The N-terminal stretch at 1 to 21 is a signal peptide; the sequence is MRTSYLLLFTLCLLLSEMASG. The propeptide occupies 22-32; that stretch reads DNFLTGLGHRS. 3 cysteine pairs are disulfide-bonded: C37/C66, C44/C59, and C49/C67.

This sequence belongs to the beta-defensin family. In terms of assembly, monomer. Homodimer.

The protein localises to the secreted. The protein resides in the membrane. In terms of biological role, has bactericidal activity. May act as a ligand for C-C chemokine receptor CCR6. Positively regulates the sperm motility and bactericidal activity in a CCR6-dependent manner. Binds to CCR6 and triggers Ca2+ mobilization in the sperm which is important for its motility. In Cercopithecus erythrogaster (Red-bellied monkey), this protein is Beta-defensin 1 (DEFB1).